A 301-amino-acid chain; its full sequence is Pyridoxal 5'-phosphate synthase subunit PdxS (301 aa).

D31 is a binding site for D-ribose 5-phosphate. Residue K88 is the Schiff-base intermediate with D-ribose 5-phosphate of the active site. Residue G160 coordinates D-ribose 5-phosphate. R172 is a D-glyceraldehyde 3-phosphate binding site. D-ribose 5-phosphate-binding positions include G221 and 242–243; that span reads GS. The disordered stretch occupies residues 273 to 301; the sequence is EIAKSPGKGMKGQANETLPEEEKLQDRGI. Residues 292 to 301 show a composition bias toward basic and acidic residues; it reads EEEKLQDRGI.

This sequence belongs to the PdxS/SNZ family. In the presence of PdxT, forms a dodecamer of heterodimers.

It catalyses the reaction aldehydo-D-ribose 5-phosphate + D-glyceraldehyde 3-phosphate + L-glutamine = pyridoxal 5'-phosphate + L-glutamate + phosphate + 3 H2O + H(+). It participates in cofactor biosynthesis; pyridoxal 5'-phosphate biosynthesis. Catalyzes the formation of pyridoxal 5'-phosphate from ribose 5-phosphate (RBP), glyceraldehyde 3-phosphate (G3P) and ammonia. The ammonia is provided by the PdxT subunit. Can also use ribulose 5-phosphate and dihydroxyacetone phosphate as substrates, resulting from enzyme-catalyzed isomerization of RBP and G3P, respectively. This Natronomonas pharaonis (strain ATCC 35678 / DSM 2160 / CIP 103997 / JCM 8858 / NBRC 14720 / NCIMB 2260 / Gabara) (Halobacterium pharaonis) protein is Pyridoxal 5'-phosphate synthase subunit PdxS.